The chain runs to 167 residues: Photosystem I assembly protein Ycf3 (167 aa).

TPR repeat units follow at residues 35–68, 72–105, and 120–153; these read AFTY…EVDA, SYIF…NPSL, and GEQA…APTN.

This sequence belongs to the Ycf3 family.

It is found in the plastid. It localises to the chloroplast thylakoid membrane. Functionally, essential for the assembly of the photosystem I (PSI) complex. May act as a chaperone-like factor to guide the assembly of the PSI subunits. The chain is Photosystem I assembly protein Ycf3 from Pleurastrum terricola (Filamentous green alga).